The following is a 250-amino-acid chain: Probable transcriptional regulatory protein Cvib_1432 (250 aa).

It belongs to the TACO1 family.

It localises to the cytoplasm. The protein is Probable transcriptional regulatory protein Cvib_1432 of Chlorobium phaeovibrioides (strain DSM 265 / 1930) (Prosthecochloris vibrioformis (strain DSM 265)).